Consider the following 410-residue polypeptide: Cytochrome P450 CYP107DY1 (410 aa).

2 residues coordinate heme: His106 and Arg110. Substrate contacts are provided by Thr249 and Glu253. Residues Arg302, His358, and Cys360 each contribute to the heme site.

Belongs to the cytochrome P450 family. Heme is required as a cofactor.

It catalyses the reaction mevastatin + 2 reduced [2Fe-2S]-[ferredoxin] + O2 + 2 H(+) = pravastatin lactone + 2 oxidized [2Fe-2S]-[ferredoxin] + H2O. In terms of biological role, cytochrome P450 whose physiological substrate is unknown. In vitro, is able to catalyze the selective hydroxylation of mevastatin to pravastatin, the widely used therapeutic agent for hypercholesterolemia. In Priestia megaterium (strain ATCC 12872 / QMB1551) (Bacillus megaterium), this protein is Cytochrome P450 CYP107DY1.